Consider the following 638-residue polypeptide: Plasma kallikrein (638 aa).

The first 19 residues, 1–19 (MILFKQATYFISLFATVSC), serve as a signal peptide directing secretion. Apple domains are found at residues 21–104 (CLTQ…LKQC), 111–194 (CHRD…LKPC), 201–284 (CHMN…LLTC), and 292–375 (CHSK…LRLC). 18 cysteine pairs are disulfide-bonded: Cys21-Cys104, Cys47-Cys77, Cys51-Cys57, Cys111-Cys194, Cys137-Cys166, Cys141-Cys147, Cys201-Cys284, Cys227-Cys256, Cys231-Cys237, Cys292-Cys375, Cys318-Cys347, Cys322-Cys328, Cys340-Cys345, Cys383-Cys503, Cys419-Cys435, Cys517-Cys584, Cys548-Cys563, and Cys574-Cys602. An N-linked (GlcNAc...) asparagine glycan is attached at Asn127. The N-linked (GlcNAc...) asparagine glycan is linked to Asn308. The Peptidase S1 domain maps to 391-626 (IVGGTNSSWG…YMDWILEKTQ (236 aa)). The N-linked (GlcNAc...) asparagine glycan is linked to Asn396. Catalysis depends on His434, which acts as the Charge relay system. Asn453 carries an N-linked (GlcNAc...) asparagine glycan. The active-site Charge relay system is the Asp483. A glycan (N-linked (GlcNAc...) asparagine) is linked at Asn494. The active-site Charge relay system is Ser578.

The protein belongs to the peptidase S1 family. Plasma kallikrein subfamily. In terms of assembly, forms a heterodimer with SERPINA5. The zymogen is activated by factor XIIa, which cleaves the molecule into a light chain, which contains the active site, and a heavy chain, which associates with HMW kininogen. These chains are linked by one or more disulfide bonds. Interacts with iripin-3, a serine protease inhibitor from Ixodes ricinus saliva. Interacts with iripin-1, a serine protease inhibitor from Ixodes ricinus saliva. Found in plasma (at protein level).

The protein resides in the secreted. The catalysed reaction is Cleaves selectively Arg-|-Xaa and Lys-|-Xaa bonds, including Lys-|-Arg and Arg-|-Ser bonds in (human) kininogen to release bradykinin.. Inhibited by SERPINA5. In terms of biological role, participates in the surface-dependent activation of blood coagulation. Activates, in a reciprocal reaction, coagulation factor XII/F12 after binding to negatively charged surfaces. Releases bradykinin from HMW kininogen and may also play a role in the renin-angiotensin system by converting prorenin into renin. The polypeptide is Plasma kallikrein (KLKB1) (Homo sapiens (Human)).